Consider the following 273-residue polypeptide: Bifunctional protein FolD (273 aa).

NADP(+) contacts are provided by residues 155 to 157 (GRS), Ser-182, and Ile-223.

It belongs to the tetrahydrofolate dehydrogenase/cyclohydrolase family. In terms of assembly, homodimer.

It catalyses the reaction (6R)-5,10-methylene-5,6,7,8-tetrahydrofolate + NADP(+) = (6R)-5,10-methenyltetrahydrofolate + NADPH. The enzyme catalyses (6R)-5,10-methenyltetrahydrofolate + H2O = (6R)-10-formyltetrahydrofolate + H(+). Its pathway is one-carbon metabolism; tetrahydrofolate interconversion. Functionally, catalyzes the oxidation of 5,10-methylenetetrahydrofolate to 5,10-methenyltetrahydrofolate and then the hydrolysis of 5,10-methenyltetrahydrofolate to 10-formyltetrahydrofolate. This chain is Bifunctional protein FolD, found in Pseudothermotoga lettingae (strain ATCC BAA-301 / DSM 14385 / NBRC 107922 / TMO) (Thermotoga lettingae).